The sequence spans 797 residues: Striatin-3 (797 aa).

N-acetylmethionine is present on methionine 1. 2 stretches are compositionally biased toward gly residues: residues 1–12 (MDELAGGGGGGP) and 33–43 (GGNGAAGGGGP). Residues 1 to 60 (MDELAGGGGGGPAMASPPRQQQGPGGNMSLSPGGNGAAGGGGPPATEGAGPAAGPELSRP) form a disordered region. Residues 44–55 (PATEGAGPAAGP) are compositionally biased toward low complexity. The tract at residues 71-79 (YIQHEWARF) is caveolin-binding. Residues 77-136 (ARFEMERAHWEVERAELQARIAFLQGERKGQENLKKDLVRRIKMLEYALKQERAKYHKLK) adopt a coiled-coil conformation. Threonine 150 bears the Phosphothreonine mark. Residues 166–183 (QNSQLTWKQGRQLLRQYL) are calmodulin-binding. Phosphoserine occurs at positions 202, 214, 229, 257, and 335. Positions 313-336 (DGEGAGEARSSGDGTEWDKDDLSP) are disordered. WD repeat units follow at residues 478 to 517 (SHFDGVRALAFHPVEPVLVTASEDHTLKLWNLQKTVPAKK), 531 to 570 (AHIGPVLSLAISSNGEQCFSGGTDATIQWWNMPSPNVDPY), 584 to 623 (AHTDAVWGLAYSGIKNQLLSCSADGTVRLWNPQEKLPCIC), 679 to 718 (QSSNHINRVVSHPTLPVTITAHEDRHIKFFDNKTGKMIHS), 721 to 760 (AHLDAVTSLAVDPNGIYLMSGSHDCSIRLWNLDSKTCVQE), and 767 to 796 (KLDESIYDVAFHPSKAYIASAGADALAKVF).

This sequence belongs to the WD repeat striatin family. Tetramerizes. Part of the core of STRIPAK complexes composed of PP2A catalytic and scaffolding subunits, the striatins (PP2A regulatory subunits), the striatin-associated proteins MOB4, STRIP1 and STRIP2, PDCD10 and members of the STE20 kinases, such as STK24 and STK26. The STRIPAK complex can be extended by adapter proteins such as SLMAP:SIKE1 or CTTNBP2NL. Interacts with CDC42BPB.

The protein localises to the cytoplasm. It localises to the membrane. In terms of biological role, calmodulin-binding scaffolding protein which is the center of the striatin-interacting phosphatase and kinase (STRIPAK) complexes. STRIPAK complexes have critical roles in protein (de)phosphorylation and are regulators of multiple signaling pathways including Hippo, MAPK, nuclear receptor and cytoskeleton remodeling. Different types of STRIPAK complexes are involved in a variety of biological processes such as cell growth, differentiation, apoptosis, metabolism and immune regulation. The sequence is that of Striatin-3 (STRN3) from Bos taurus (Bovine).